The following is a 154-amino-acid chain: Protein X (154 aa).

Positions 68 to 117 are mitochondrial targeting sequence; the sequence is PCALRFTSARRMETTVNAPQSLPTTLHKRTLGLSPRSTTWIEEYIKDCVF.

The protein belongs to the orthohepadnavirus protein X family. May form homodimer. May interact with host CEBPA, CFLAR, CREB1, DDB1, E4F1, HBXIP, HSPD1/HSP60, NFKBIA, POLR2E and SMAD4. Interacts with host SMC5-SMC6 complex and induces its degradation. Interacts with host TRPC4AP; leading to prevent ubiquitination of TRPC4AP. Interacts with host PLSCR1; this interaction promotes ubiquitination and degradation of HBx and impairs HBx-mediated cell proliferation. Post-translationally, a fraction may be phosphorylated in insect cells and HepG2 cells, a human hepatoblastoma cell line. Phosphorylated in vitro by host protein kinase C or mitogen-activated protein kinase. N-acetylated in insect cells.

It localises to the host cytoplasm. The protein localises to the host nucleus. Its subcellular location is the host mitochondrion. Its function is as follows. Multifunctional protein that plays a role in silencing host antiviral defenses and promoting viral transcription. Does not seem to be essential for HBV infection. May be directly involved in development of cirrhosis and liver cancer (hepatocellular carcinoma). Most of cytosolic activities involve modulation of cytosolic calcium. The effect on apoptosis is controversial depending on the cell types in which the studies have been conducted. May induce apoptosis by localizing in mitochondria and causing loss of mitochondrial membrane potential. May also modulate apoptosis by binding host CFLAR, a key regulator of the death-inducing signaling complex (DISC). Promotes viral transcription by using the host E3 ubiquitin ligase DDB1 to target the SMC5-SMC6 complex to proteasomal degradation. This host complex would otherwise bind to viral episomal DNA, and prevents its transcription. Moderately stimulates transcription of many different viral and cellular transcription elements. Promoters and enhancers stimulated by HBx contain DNA binding sites for NF-kappa-B, AP-1, AP-2, c-EBP, ATF/CREB, or the calcium-activated factor NF-AT. This is Protein X from Hepatitis B virus genotype H subtype adw4 (isolate Nicaragua/2928Nic/1997) (HBV-H).